Here is a 172-residue protein sequence, read N- to C-terminus: Adenine phosphoribosyltransferase (172 aa).

The protein belongs to the purine/pyrimidine phosphoribosyltransferase family. Homodimer.

It localises to the cytoplasm. The enzyme catalyses AMP + diphosphate = 5-phospho-alpha-D-ribose 1-diphosphate + adenine. It functions in the pathway purine metabolism; AMP biosynthesis via salvage pathway; AMP from adenine: step 1/1. Its function is as follows. Catalyzes a salvage reaction resulting in the formation of AMP, that is energically less costly than de novo synthesis. This chain is Adenine phosphoribosyltransferase, found in Clostridium botulinum (strain Eklund 17B / Type B).